Here is a 92-residue protein sequence, read N- to C-terminus: ATP synthase subunit c (92 aa).

The next 2 membrane-spanning stretches (helical) occupy residues 20 to 40 and 71 to 91; these read GAGL…GTGL and MAIS…LVFV.

Belongs to the ATPase C chain family. As to quaternary structure, F-type ATPases have 2 components, F(1) - the catalytic core - and F(0) - the membrane proton channel. F(1) has five subunits: alpha(3), beta(3), gamma(1), delta(1), epsilon(1). F(0) has three main subunits: a(1), b(2) and c(10-14). The alpha and beta chains form an alternating ring which encloses part of the gamma chain. F(1) is attached to F(0) by a central stalk formed by the gamma and epsilon chains, while a peripheral stalk is formed by the delta and b chains.

It localises to the cell membrane. In terms of biological role, f(1)F(0) ATP synthase produces ATP from ADP in the presence of a proton or sodium gradient. F-type ATPases consist of two structural domains, F(1) containing the extramembraneous catalytic core and F(0) containing the membrane proton channel, linked together by a central stalk and a peripheral stalk. During catalysis, ATP synthesis in the catalytic domain of F(1) is coupled via a rotary mechanism of the central stalk subunits to proton translocation. Key component of the F(0) channel; it plays a direct role in translocation across the membrane. A homomeric c-ring of between 10-14 subunits forms the central stalk rotor element with the F(1) delta and epsilon subunits. This chain is ATP synthase subunit c, found in Mycoplasmopsis pulmonis (strain UAB CTIP) (Mycoplasma pulmonis).